The following is a 369-amino-acid chain: Probable dual-specificity RNA methyltransferase RlmN (369 aa).

Catalysis depends on Glu108, which acts as the Proton acceptor. In terms of domain architecture, Radical SAM core spans 114–351 (YPDRATLCIS…LAQGVSCTVR (238 aa)). A disulfide bridge connects residues Cys121 and Cys362. [4Fe-4S] cluster-binding residues include Cys128, Cys132, and Cys135. Residues 183 to 184 (GE), Ser217, 240 to 242 (SLH), and Asn319 contribute to the S-adenosyl-L-methionine site. Catalysis depends on Cys362, which acts as the S-methylcysteine intermediate.

It belongs to the radical SAM superfamily. RlmN family. It depends on [4Fe-4S] cluster as a cofactor.

The protein resides in the cytoplasm. The catalysed reaction is adenosine(2503) in 23S rRNA + 2 reduced [2Fe-2S]-[ferredoxin] + 2 S-adenosyl-L-methionine = 2-methyladenosine(2503) in 23S rRNA + 5'-deoxyadenosine + L-methionine + 2 oxidized [2Fe-2S]-[ferredoxin] + S-adenosyl-L-homocysteine. It carries out the reaction adenosine(37) in tRNA + 2 reduced [2Fe-2S]-[ferredoxin] + 2 S-adenosyl-L-methionine = 2-methyladenosine(37) in tRNA + 5'-deoxyadenosine + L-methionine + 2 oxidized [2Fe-2S]-[ferredoxin] + S-adenosyl-L-homocysteine. In terms of biological role, specifically methylates position 2 of adenine 2503 in 23S rRNA and position 2 of adenine 37 in tRNAs. This chain is Probable dual-specificity RNA methyltransferase RlmN, found in Rhodococcus opacus (strain B4).